A 140-amino-acid polypeptide reads, in one-letter code: Large ribosomal subunit protein uL11 (140 aa).

It belongs to the universal ribosomal protein uL11 family. Part of the ribosomal stalk of the 50S ribosomal subunit. Interacts with L10 and the large rRNA to form the base of the stalk. L10 forms an elongated spine to which L12 dimers bind in a sequential fashion forming a multimeric L10(L12)X complex. One or more lysine residues are methylated.

Its function is as follows. Forms part of the ribosomal stalk which helps the ribosome interact with GTP-bound translation factors. The sequence is that of Large ribosomal subunit protein uL11 from Pelobacter propionicus (strain DSM 2379 / NBRC 103807 / OttBd1).